We begin with the raw amino-acid sequence, 741 residues long: Phosphoribosylformylglycinamidine synthase subunit PurL (741 aa).

The active site involves His54. Positions 57 and 98 each coordinate ATP. Glu100 lines the Mg(2+) pocket. Residues Ser101–His104 and Arg123 contribute to the substrate site. Residue His102 is the Proton acceptor of the active site. A Mg(2+)-binding site is contributed by Asp124. Residue Gln251 coordinates substrate. Position 279 (Asp279) interacts with Mg(2+). Glu323 to Gln325 is a substrate binding site. Positions 510 and 547 each coordinate ATP. Asn548 serves as a coordination point for Mg(2+). Ser550 contributes to the substrate binding site.

It belongs to the FGAMS family. In terms of assembly, monomer. Part of the FGAM synthase complex composed of 1 PurL, 1 PurQ and 2 PurS subunits.

The protein resides in the cytoplasm. The catalysed reaction is N(2)-formyl-N(1)-(5-phospho-beta-D-ribosyl)glycinamide + L-glutamine + ATP + H2O = 2-formamido-N(1)-(5-O-phospho-beta-D-ribosyl)acetamidine + L-glutamate + ADP + phosphate + H(+). Its pathway is purine metabolism; IMP biosynthesis via de novo pathway; 5-amino-1-(5-phospho-D-ribosyl)imidazole from N(2)-formyl-N(1)-(5-phospho-D-ribosyl)glycinamide: step 1/2. In terms of biological role, part of the phosphoribosylformylglycinamidine synthase complex involved in the purines biosynthetic pathway. Catalyzes the ATP-dependent conversion of formylglycinamide ribonucleotide (FGAR) and glutamine to yield formylglycinamidine ribonucleotide (FGAM) and glutamate. The FGAM synthase complex is composed of three subunits. PurQ produces an ammonia molecule by converting glutamine to glutamate. PurL transfers the ammonia molecule to FGAR to form FGAM in an ATP-dependent manner. PurS interacts with PurQ and PurL and is thought to assist in the transfer of the ammonia molecule from PurQ to PurL. In Picrophilus torridus (strain ATCC 700027 / DSM 9790 / JCM 10055 / NBRC 100828 / KAW 2/3), this protein is Phosphoribosylformylglycinamidine synthase subunit PurL.